The chain runs to 232 residues: Ribose-5-phosphate isomerase A (232 aa).

Residues 31–34, 87–90, and 100–103 each bind substrate; these read TGST, DGAD, and KGGG. The active-site Proton acceptor is glutamate 109. A substrate-binding site is contributed by lysine 127.

This sequence belongs to the ribose 5-phosphate isomerase family. In terms of assembly, homodimer.

It carries out the reaction aldehydo-D-ribose 5-phosphate = D-ribulose 5-phosphate. Its pathway is carbohydrate degradation; pentose phosphate pathway; D-ribose 5-phosphate from D-ribulose 5-phosphate (non-oxidative stage): step 1/1. Functionally, catalyzes the reversible conversion of ribose-5-phosphate to ribulose 5-phosphate. This is Ribose-5-phosphate isomerase A from Bifidobacterium adolescentis (strain ATCC 15703 / DSM 20083 / NCTC 11814 / E194a).